Reading from the N-terminus, the 316-residue chain is Daunorubicin resistance ATP-binding protein DrrA3 (316 aa).

One can recognise an ABC transporter domain in the interval 6–236 (ITVDGAEKRY…TGGDRIDVVL (231 aa)). 38-45 (GPNGAGKT) contacts ATP.

It belongs to the ABC transporter superfamily. Drug exporter-1 (DrugE1) (TC 3.A.1.105) family. The complex is probably composed of two ATP-binding proteins (DrrA3) and two transmembrane proteins (DrrB3).

The protein localises to the cell membrane. The catalysed reaction is daunorubicin(in) + ATP + H2O = daunorubicin(out) + ADP + phosphate + H(+). Functionally, part of the ABC transporter complex DrrA3B3 involved in daunorubicin efflux. Responsible for energy coupling to the transport system. Confers self-resistance to daunorubicin, an antibiotic produced by S.coeruleorubidus. The efficiency of DrrA3B3 to export daunorubicin is probably lower than that of DrrA1B1 or DrrA2B2. This Streptomyces coeruleorubidus protein is Daunorubicin resistance ATP-binding protein DrrA3.